Reading from the N-terminus, the 206-residue chain is Macrophage immunometabolism regulator (206 aa).

This sequence belongs to the UNC119-binding protein family. As to quaternary structure, interacts with unc119 family proteins; interaction preferentially takes place when unc119 proteins are unliganded with myristoylated proteins.

Its subcellular location is the cytoplasm. It localises to the cell projection. The protein resides in the cilium. In terms of biological role, may play a role in immune regulation through regulation of the macrophage function. Involved in the recruitment of macrophages in response to injury. May also play a role in trafficking of proteins via its interaction with unc119 family cargo adapters. May play a role in ciliary membrane localization. Functionally, regulates the macrophage function, by enhancing the resolution of inflammation and wound repair functions mediated by M2 macrophages. The regulation of macrophage function is, due at least in part, to the role of C5orf30 in regulating ability to inhibit glycolysis. Probably plays alaso a role in trafficking of proteins via its interaction with UNC119 and UNC119B cargo adapters: may help the release of UNC119 and UNC119B cargo or the recycling of UNC119 and UNC119B. May play a role in ciliary membrane localization via its interaction with UNC119B and protein transport into photoreceptor cells. In Danio rerio (Zebrafish), this protein is Macrophage immunometabolism regulator (macir).